The following is a 699-amino-acid chain: Polyribonucleotide nucleotidyltransferase (699 aa).

D488 and D494 together coordinate Mg(2+). Residues P555–I614 enclose the KH domain. Residues G624–K692 form the S1 motif domain.

This sequence belongs to the polyribonucleotide nucleotidyltransferase family. As to quaternary structure, component of the RNA degradosome, which is a multiprotein complex involved in RNA processing and mRNA degradation. Requires Mg(2+) as cofactor.

It is found in the cytoplasm. The enzyme catalyses RNA(n+1) + phosphate = RNA(n) + a ribonucleoside 5'-diphosphate. In terms of biological role, involved in mRNA degradation. Catalyzes the phosphorolysis of single-stranded polyribonucleotides processively in the 3'- to 5'-direction. The protein is Polyribonucleotide nucleotidyltransferase of Blochmanniella pennsylvanica (strain BPEN).